Consider the following 195-residue polypeptide: Probable peroxygenase 4 (195 aa).

An EF-hand domain is found at 14–49 (EEDNFLQRHVAFFDRNKDGIVYPSETFQGFRAIGCG). Position 22 (His-22) interacts with heme. Ca(2+) is bound by residues Asp-27, Asn-29, Asp-31, and Glu-38. Residues 70 to 79 (PGKGFSIWFP) carry the Proline-knot motif. Phosphoserine is present on Ser-177.

Belongs to the caleosin family. Homodimer. Heme b is required as a cofactor. The cofactor is Ca(2+). As to expression, expressed in roots, leaves, stems, shoots, flowers and germinated seeds. Barely detected in dry seeds prior to germination. Preferentially expressed in vascular bundles and in guard cells.

The protein resides in the lipid droplet. The catalysed reaction is RH + ROOH = ROH + ROH.. Calcium-binding peroxygenase involved in the degradation of storage lipid in oil bodies. May be involved in the interaction between oil bodies and vacuoles during seed germination. Acts as a negative regulator of abscisic acid responses in non-seed tissues. This Arabidopsis thaliana (Mouse-ear cress) protein is Probable peroxygenase 4 (PXG4).